A 103-amino-acid polypeptide reads, in one-letter code: Small ribosomal subunit protein uS10 (103 aa).

This sequence belongs to the universal ribosomal protein uS10 family. As to quaternary structure, part of the 30S ribosomal subunit.

Functionally, involved in the binding of tRNA to the ribosomes. The chain is Small ribosomal subunit protein uS10 from Jannaschia sp. (strain CCS1).